We begin with the raw amino-acid sequence, 1161 residues long: ATP-dependent helicase/deoxyribonuclease subunit B (1161 aa).

It belongs to the helicase family. AddB/RexB type 2 subfamily. In terms of assembly, heterodimer of AddA and RexB. The cofactor is Mg(2+).

In terms of biological role, the heterodimer acts as both an ATP-dependent DNA helicase and an ATP-dependent, dual-direction single-stranded exonuclease. Recognizes the chi site generating a DNA molecule suitable for the initiation of homologous recombination. This subunit has 5' -&gt; 3' nuclease activity but not helicase activity. The sequence is that of ATP-dependent helicase/deoxyribonuclease subunit B from Oenococcus oeni (strain ATCC BAA-331 / PSU-1).